The following is a 1529-amino-acid chain: Ras guanine nucleotide exchange factor B (1529 aa).

Residues 135–186 (ISNIEKQLSNLVNLKSNTTEQTDRKYKTNLIDFKESIIQLEKDCKNLLKQSN) are a coiled coil. 5 disordered regions span residues 290 to 357 (INTL…ISIN), 576 to 600 (TTTTTTTTTTTNTTTNPSNTIKSSH), 680 to 724 (KRNT…HIQQ), 847 to 948 (MGKE…NHNR), and 1168 to 1206 (QPPQITTQSTQPIQNSTTQPQPQPQPQQPQPQLQQSTNL). Low complexity-rich tracts occupy residues 576-591 (TTTTTTTTTTTNTTTN), 683-724 (TSSG…HIQQ), and 853-887 (NSNTNNANNPNNNNNNNNNNNNNNNNNNNNNNNNE). 2 coiled-coil regions span residues 722 to 798 (IQQI…LNRK) and 871 to 898 (NNNNNNNNNNNNNNNNENKNENKNETNK). Positions 888 to 898 (NKNENKNETNK) are enriched in basic and acidic residues. 4 stretches are compositionally biased toward low complexity: residues 906–916 (SSTSTLSSSTT), 924–940 (SSTNSPNSSTPNLLLPP), 1168–1187 (QPPQITTQSTQPIQNSTTQP), and 1197–1206 (QPQLQQSTNL). Residues 1075 to 1205 (FYRSIKYASL…PQPQLQQSTN (131 aa)) form the N-terminal Ras-GEF domain. Residues 1282–1517 (SSTDIAEQLT…YEQSILLEPK (236 aa)) form the Ras-GEF domain.

The protein localises to the cytoplasm. Functionally, promotes the exchange of Ras-bound GDP by GTP. Involved in phagocytosis, fluid-phase endocytosis, regulation of macropinocytosis and control of cell movement. This chain is Ras guanine nucleotide exchange factor B (gefB), found in Dictyostelium discoideum (Social amoeba).